The sequence spans 191 residues: Peptide methionine sulfoxide reductase (191 aa).

Disordered stretches follow at residues 1–20 (MASSTTNNPALDLDSDTPEN) and 168–191 (EKGGGNGNKQSAQKGCNDPIKCYG).

The protein belongs to the MsrA Met sulfoxide reductase family.

The catalysed reaction is L-methionyl-[protein] + [thioredoxin]-disulfide + H2O = L-methionyl-(S)-S-oxide-[protein] + [thioredoxin]-dithiol. It catalyses the reaction [thioredoxin]-disulfide + L-methionine + H2O = L-methionine (S)-S-oxide + [thioredoxin]-dithiol. In terms of biological role, has an important function as a repair enzyme for proteins that have been inactivated by oxidation. Catalyzes the reversible oxidation-reduction of methionine sulfoxide in proteins to methionine. The sequence is that of Peptide methionine sulfoxide reductase from Fragaria ananassa (Strawberry).